Consider the following 154-residue polypeptide: Lipoprotein signal peptidase (154 aa).

Helical transmembrane passes span 55 to 75 (GHMW…IYIM) and 84 to 104 (LFSI…IDRV). Catalysis depends on residues D111 and D129. A helical membrane pass occupies residues 124–144 (IFNVADAALSVGVVLMLVYVF).

The protein belongs to the peptidase A8 family.

It is found in the cell membrane. It carries out the reaction Release of signal peptides from bacterial membrane prolipoproteins. Hydrolyzes -Xaa-Yaa-Zaa-|-(S,diacylglyceryl)Cys-, in which Xaa is hydrophobic (preferably Leu), and Yaa (Ala or Ser) and Zaa (Gly or Ala) have small, neutral side chains.. Its pathway is protein modification; lipoprotein biosynthesis (signal peptide cleavage). Its function is as follows. This protein specifically catalyzes the removal of signal peptides from prolipoproteins. The protein is Lipoprotein signal peptidase of Listeria monocytogenes serotype 4b (strain CLIP80459).